The chain runs to 118 residues: Putative pterin-4-alpha-carbinolamine dehydratase (118 aa).

This sequence belongs to the pterin-4-alpha-carbinolamine dehydratase family.

The catalysed reaction is (4aS,6R)-4a-hydroxy-L-erythro-5,6,7,8-tetrahydrobiopterin = (6R)-L-erythro-6,7-dihydrobiopterin + H2O. This is Putative pterin-4-alpha-carbinolamine dehydratase (phhB) from Xanthomonas axonopodis pv. citri (strain 306).